Consider the following 445-residue polypeptide: Phosphoglucosamine mutase (445 aa).

The active-site Phosphoserine intermediate is the S99. Positions 99, 242, 244, and 246 each coordinate Mg(2+). S99 is modified (phosphoserine).

The protein belongs to the phosphohexose mutase family. Mg(2+) serves as cofactor. In terms of processing, activated by phosphorylation.

The enzyme catalyses alpha-D-glucosamine 1-phosphate = D-glucosamine 6-phosphate. In terms of biological role, catalyzes the conversion of glucosamine-6-phosphate to glucosamine-1-phosphate. The polypeptide is Phosphoglucosamine mutase (Sulfurovum sp. (strain NBC37-1)).